Reading from the N-terminus, the 341-residue chain is Fructose-1,6-bisphosphatase, cytosolic (341 aa).

Residues Glu-100, Asp-121, Leu-123, and Asp-124 each coordinate Mg(2+). Residues Asp-124–Ser-127, Asn-215, Tyr-247, Tyr-267, and Lys-277 contribute to the substrate site. A Mg(2+)-binding site is contributed by Glu-283.

The protein belongs to the FBPase class 1 family. It depends on Mg(2+) as a cofactor.

It localises to the cytoplasm. It carries out the reaction beta-D-fructose 1,6-bisphosphate + H2O = beta-D-fructose 6-phosphate + phosphate. This chain is Fructose-1,6-bisphosphatase, cytosolic (FBPban1), found in Musa acuminata (Banana).